Here is a 342-residue protein sequence, read N- to C-terminus: Ribosomal RNA small subunit methyltransferase C (342 aa).

This sequence belongs to the methyltransferase superfamily. RsmC family. As to quaternary structure, monomer.

It is found in the cytoplasm. The catalysed reaction is guanosine(1207) in 16S rRNA + S-adenosyl-L-methionine = N(2)-methylguanosine(1207) in 16S rRNA + S-adenosyl-L-homocysteine + H(+). Specifically methylates the guanine in position 1207 of 16S rRNA in the 30S particle. The protein is Ribosomal RNA small subunit methyltransferase C of Shewanella piezotolerans (strain WP3 / JCM 13877).